Consider the following 60-residue polypeptide: Metallothionein A (60 aa).

The interval 1–28 (MDPCECSKSGNCNCGGSCTCTNCSCKSC) is beta. Residues C4, C6, C12, C14, C18, C20, C23, C25, C28, C32, C33, C35, C36, C40, C43, C47, C49, C54, C58, and C59 each contribute to the a divalent metal cation site. Residues 29–60 (KKSCCPCCPSGCTKCASGCVCIGKTCDTSCCQ) are alpha.

The protein belongs to the metallothionein superfamily. Type 1 family.

Functionally, metallothioneins have a high content of cysteine residues that bind various heavy metals. The chain is Metallothionein A (mta) from Chaenocephalus aceratus (Blackfin icefish).